Reading from the N-terminus, the 159-residue chain is Ribosomal RNA large subunit methyltransferase H (159 aa).

Residues Leu-76, Gly-108, and 127 to 132 contribute to the S-adenosyl-L-methionine site; that span reads FSKMTF.

This sequence belongs to the RNA methyltransferase RlmH family. Homodimer.

It localises to the cytoplasm. It carries out the reaction pseudouridine(1915) in 23S rRNA + S-adenosyl-L-methionine = N(3)-methylpseudouridine(1915) in 23S rRNA + S-adenosyl-L-homocysteine + H(+). Functionally, specifically methylates the pseudouridine at position 1915 (m3Psi1915) in 23S rRNA. This is Ribosomal RNA large subunit methyltransferase H from Clostridium botulinum (strain Langeland / NCTC 10281 / Type F).